The following is an 81-amino-acid chain: Conotoxin Vc6.13 (81 aa).

Positions 1–19 are cleaved as a signal peptide; sequence MEKLTILLLVAAVLMSIQA. Residues 20 to 44 constitute a propeptide that is removed on maturation; sequence LNQEQHQRAKINLLSKRKAPAERWW. Intrachain disulfides connect cysteine 49–cysteine 63, cysteine 56–cysteine 67, and cysteine 62–cysteine 72.

It belongs to the conotoxin O2 superfamily. As to expression, expressed by the venom duct.

Its subcellular location is the secreted. In terms of biological role, inhibits voltage-gated ion channels. This Conus victoriae (Queen Victoria cone) protein is Conotoxin Vc6.13.